Consider the following 286-residue polypeptide: Nucleotide-binding protein VC_2532 (286 aa).

8 to 15 (GQSGAGKS) contributes to the ATP binding site. 56–59 (DIRN) lines the GTP pocket.

The protein belongs to the RapZ-like family.

In terms of biological role, displays ATPase and GTPase activities. This Vibrio cholerae serotype O1 (strain ATCC 39315 / El Tor Inaba N16961) protein is Nucleotide-binding protein VC_2532.